The chain runs to 154 residues: Transcriptional repressor NrdR (154 aa).

Residues C3–C34 fold into a zinc finger. The 91-residue stretch at L49–T139 folds into the ATP-cone domain.

The protein belongs to the NrdR family. Requires Zn(2+) as cofactor.

In terms of biological role, negatively regulates transcription of bacterial ribonucleotide reductase nrd genes and operons by binding to NrdR-boxes. The chain is Transcriptional repressor NrdR from Alkaliphilus oremlandii (strain OhILAs) (Clostridium oremlandii (strain OhILAs)).